The chain runs to 365 residues: 2-aminoethylphosphonate--pyruvate transaminase (365 aa).

At Lys194 the chain carries N6-(pyridoxal phosphate)lysine.

This sequence belongs to the class-V pyridoxal-phosphate-dependent aminotransferase family. PhnW subfamily. Homodimer. It depends on pyridoxal 5'-phosphate as a cofactor.

It carries out the reaction (2-aminoethyl)phosphonate + pyruvate = phosphonoacetaldehyde + L-alanine. Its function is as follows. Involved in phosphonate degradation. The protein is 2-aminoethylphosphonate--pyruvate transaminase of Bacillus thuringiensis subsp. konkukian (strain 97-27).